The sequence spans 270 residues: BPI fold-containing family A member 5 (270 aa).

The N-terminal stretch at 1–19 (MFLAGSFIVLCGLLAQSTA) is a signal peptide. Cys-196 and Cys-238 are joined by a disulfide.

The protein belongs to the BPI/LBP/Plunc superfamily. Plunc family. In terms of tissue distribution, expressed in interpapillar epithelium of the anterior part of the tongue.

Its subcellular location is the secreted. In terms of biological role, may play a role in innate immunity in the oral cavity. This chain is BPI fold-containing family A member 5 (Bpifa5), found in Mus musculus (Mouse).